The chain runs to 1259 residues: Ankyrin repeat and sterile alpha motif domain-containing protein 1B (1259 aa).

ANK repeat units lie at residues 2–31 (GKDQ…GGIL), 58–87 (SGYT…STNV), 91–120 (KGYF…SHSR), 127–156 (ENET…DPTI), 160–189 (KLET…NLMS), 193–222 (RKHT…DVSC), and 225–254 (EKGS…DANI). Positions 298 to 325 (HAQEDTAQETHLSSPAESPQKTKSETVT) are disordered. A compositionally biased stretch (polar residues) spans 306–325 (ETHLSSPAESPQKTKSETVT). A phosphoserine mark is found at Ser-310, Ser-311, Ser-315, Ser-353, and Ser-364. 4 disordered regions span residues 367–401 (ELGK…SCGP), 490–513 (PGTS…SPDT), 556–614 (CTSF…GSSP), and 631–661 (TCED…EPSV). A compositionally biased stretch (polar residues) spans 371 to 384 (NGSQSVRTSSTINL). Thr-503 carries the phosphothreonine modification. Residues Ser-507 and Ser-510 each carry the phosphoserine modification. A compositionally biased stretch (low complexity) spans 556–574 (CTSFTSSPAASPPTSSVET). Positions 575–587 (TEVKNEGAEHADD) are enriched in basic and acidic residues. The residue at position 738 (Ser-738) is a Phosphoserine. The segment at 753-776 (VNWSKSSTAERSSKDNSERTPSFT) is disordered. Thr-772 carries the phosphothreonine modification. Phosphoserine is present on Ser-774. SAM domains are found at residues 809-875 (CPVQ…LPKM) and 883-948 (YHPT…RLHD). Tyr-900 carries the post-translational modification Phosphotyrosine. Residue His-934 is a short sequence motif, nuclear localization signal. Residues 943-988 (GDRLHDDPPQKPPRSITLREPSGNHTPPQLSPSLSQSTYTTGGSLD) form a disordered region. The segment covering 968-983 (TPPQLSPSLSQSTYTT) has biased composition (low complexity). Position 973 is a phosphoserine (Ser-973). Tyr-1006 carries the phosphotyrosine modification. One can recognise a PID domain in the interval 1055-1212 (IFQSCDYKAF…SFENKPSKPI (158 aa)). Positions 1196–1216 (HSSTLPESFENKPSKPIPKPR) are disordered.

As to quaternary structure, interacts with EPHA8. Isoform 2 interacts with COIL.

It localises to the cytoplasm. It is found in the nucleus. The protein resides in the postsynaptic density. The protein localises to the cell projection. Its subcellular location is the dendritic spine. In terms of biological role, isoform 2 may participate in the regulation of nucleoplasmic coilin protein interactions in neuronal and transformed cells. The sequence is that of Ankyrin repeat and sterile alpha motif domain-containing protein 1B (Anks1b) from Mus musculus (Mouse).